Consider the following 184-residue polypeptide: Pyridoxal 5'-phosphate synthase subunit PdxT (184 aa).

An L-glutamine-binding site is contributed by 46–48 (GES). The active-site Nucleophile is Cys-75. L-glutamine contacts are provided by residues Arg-101 and 129–130 (IR). Catalysis depends on charge relay system residues His-165 and Glu-167.

The protein belongs to the glutaminase PdxT/SNO family. In terms of assembly, in the presence of PdxS, forms a dodecamer of heterodimers. Only shows activity in the heterodimer.

The enzyme catalyses aldehydo-D-ribose 5-phosphate + D-glyceraldehyde 3-phosphate + L-glutamine = pyridoxal 5'-phosphate + L-glutamate + phosphate + 3 H2O + H(+). It carries out the reaction L-glutamine + H2O = L-glutamate + NH4(+). The protein operates within cofactor biosynthesis; pyridoxal 5'-phosphate biosynthesis. Catalyzes the hydrolysis of glutamine to glutamate and ammonia as part of the biosynthesis of pyridoxal 5'-phosphate. The resulting ammonia molecule is channeled to the active site of PdxS. The protein is Pyridoxal 5'-phosphate synthase subunit PdxT of Staphylococcus haemolyticus (strain JCSC1435).